Here is a 535-residue protein sequence, read N- to C-terminus: Dimethylaniline monooxygenase [N-oxide-forming] 2 (535 aa).

Alanine 2 is subject to N-acetylalanine. Residues 9 to 13 (GAGVS), glutamate 32, 40 to 41 (LW), and 61 to 62 (NT) contribute to the FAD site. Residues 60 to 61 (TN) and 195 to 198 (SASD) contribute to the NADP(+) site. A Glycyl lysine isopeptide (Lys-Gly) (interchain with G-Cter in SUMO) cross-link involves residue lysine 492. The chain crosses the membrane as a helical span at residues 510–530 (FPVSFLLKFLGLFALVLAFLF).

The protein belongs to the FMO family. Requires FAD as cofactor. Mg(2+) serves as cofactor. As to expression, lung.

The protein resides in the microsome membrane. The protein localises to the endoplasmic reticulum membrane. The enzyme catalyses N,N-dimethylaniline + NADPH + O2 + H(+) = N,N-dimethylaniline N-oxide + NADP(+) + H2O. Catalyzes the oxidative metabolism of numerous xenobiotics, including mainly therapeutic drugs and insecticides that contain a soft nucleophile, most commonly nitrogen and sulfur and participates to their bioactivation. Most drug substrates are tertiary amines such as prochlorperazine and trifluoperazine which are N-oxygenated to form the N-oxide, or sulfides such as thiourea and ethionamide, which are S-oxygenated to the sulfoxide. Others include primary alkylamines such as N-dodecylamine and octan-1-amine that are sequentially monooxygenated to oximes through intermediate hydroxylamines and both steps are NADPH- and oxygen-dependent. Also metabolized N-Deacetyl ketoconazole (DAK) to N-hydroxy-DAK and appears to further metabolizes N-hydroxy-DAK to two others metabolites. Also catalyzes S-oxygenation of the thioether-containing organophosphate insecticides, phorate and disulfoton. The sequence is that of Dimethylaniline monooxygenase [N-oxide-forming] 2 from Oryctolagus cuniculus (Rabbit).